The sequence spans 224 residues: uncharacterized protein (224 aa).

An HTH gntR-type domain is found at 10 to 77 (TPYYLQFYNQ…DRNGFSITSL (68 aa)). Positions 37-56 (ETQLAKSFGVSRSPIREAMR) form a DNA-binding region, H-T-H motif.

This is an uncharacterized protein from Bacillus subtilis (strain 168).